The primary structure comprises 885 residues: 3-hydroxy-3-methylglutaryl-coenzyme A reductase (885 aa).

Residues methionine 1–histidine 9 are Cytoplasmic-facing. The helical transmembrane segment at glycine 10–glycine 39 threads the bilayer. At asparagine 40 to aspartate 56 the chain is on the lumenal side. Residues valine 57–phenylalanine 78 traverse the membrane as a helical segment. In terms of domain architecture, SSD spans aspartate 61–leucine 218. The short motif at tyrosine 75–phenylalanine 78 is the INSIG-binding motif element. Over glutamine 79–lysine 89 the chain is Cytoplasmic. A Glycyl lysine isopeptide (Lys-Gly) (interchain with G-Cter in ubiquitin) cross-link involves residue lysine 89. Residues tyrosine 90 to leucine 114 form a helical membrane-spanning segment. The Lumenal segment spans residues aspartate 115 to glutamate 123. A helical membrane pass occupies residues alanine 124 to serine 149. Residues glutamine 150–arginine 159 lie on the Cytoplasmic side of the membrane. Residues glycine 160 to valine 187 form a helical membrane-spanning segment. The Lumenal portion of the chain corresponds to arginine 188–glutamate 191. Residues isoleucine 192–leucine 220 traverse the membrane as a helical segment. Residues glutamate 221 to lysine 248 lie on the Cytoplasmic side of the membrane. Lysine 248 is covalently cross-linked (Glycyl lysine isopeptide (Lys-Gly) (interchain with G-Cter in ubiquitin)). A helical transmembrane segment spans residues proline 249–alanine 275. The Lumenal segment spans residues aspartate 276–lysine 314. N-linked (GlcNAc...) asparagine glycans are attached at residues asparagine 281 and asparagine 296. A helical membrane pass occupies residues methionine 315–phenylalanine 339. At glutamate 340–alanine 885 the chain is on the cytoplasmic side. Catalysis depends on charge relay system residues glutamate 558, lysine 688, and aspartate 764. The active-site Proton donor is histidine 863. Serine 869 is modified (phosphoserine; by AMPK).

It belongs to the HMG-CoA reductase family. As to quaternary structure, homotetramer. Homodimer. Interacts (via its SSD) with INSIG1; the interaction, accelerated by sterols, leads to the recruitment of HMGCR to AMFR/gp78 for its ubiquitination by the sterol-mediated ERAD pathway. Interacts with UBIAD1. Post-translationally, undergoes sterol-mediated ubiquitination and ER-associated degradation (ERAD). Accumulation of sterols in the endoplasmic reticulum (ER) membrane, triggers binding of the reductase to the ER membrane protein INSIG1 or INSIG2. The INSIG1 binding leads to the recruitment of the ubiquitin ligase, AMFR/gp78, RNF139 or RNF145, initiating ubiquitination of the reductase. The ubiquitinated reductase is then extracted from the ER membrane and delivered to cytosolic 26S proteosomes by a mechanism probably mediated by the ATPase Valosin-containing protein VCP/p97. The INSIG2-binding leads to the recruitment of the ubiquitin ligase RNF139, initiating ubiquitination of the reductase. Lys-248 is the main site of ubiquitination. Ubiquitination is enhanced by the presence of a geranylgeranylated protein. N-glycosylated. Deglycosylated by NGLY1 on release from the endoplasmic reticulum (ER) in a sterol-mediated manner. In terms of processing, phosphorylated. Phosphorylation at Ser-869 reduces the catalytic activity. As to expression, high expression found in liver, heart, kidney, bladder and subcutaneous fat. Lower levels in lung, uterus and large intestine. Lowest levels in cerebrum, spleen, spinal cord, stomach, ovary, longissimus muscle, and small intestine.

The protein localises to the endoplasmic reticulum membrane. Its subcellular location is the peroxisome membrane. The catalysed reaction is (R)-mevalonate + 2 NADP(+) + CoA = (3S)-3-hydroxy-3-methylglutaryl-CoA + 2 NADPH + 2 H(+). The protein operates within metabolic intermediate biosynthesis; (R)-mevalonate biosynthesis; (R)-mevalonate from acetyl-CoA: step 3/3. Regulated by a negative feedback mechanism through sterols and non-sterol metabolites derived from mevalonate. Phosphorylation at Ser-869 down-regulates the catalytic activity. Functionally, catalyzes the conversion of (3S)-hydroxy-3-methylglutaryl-CoA (HMG-CoA) to mevalonic acid, the rate-limiting step in the synthesis of cholesterol and other isoprenoids, thus plays a critical role in cellular cholesterol homeostasis. This Sus scrofa (Pig) protein is 3-hydroxy-3-methylglutaryl-coenzyme A reductase (HMGCR).